Here is a 799-residue protein sequence, read N- to C-terminus: Potassium transporter 21 (799 aa).

At 1-56 (MDPGVEKKKQQMELVDVESGGLPVERQDSLFREAVRAEHAGAAHWDEQDSWGRTMS) the chain is on the cytoplasmic side. A helical membrane pass occupies residues 57 to 77 (LAFQCVGILYGDIGTSSLYVY). Residues 78 to 93 (SSTFEHGIGHPDDVVG) lie on the Extracellular side of the membrane. The chain crosses the membrane as a helical span at residues 94-114 (VLSLIVYSFMLFTVIKIVFVA). Residues 115–181 (LHANDHGDGG…QLLEASKAAK (67 aa)) lie on the Cytoplasmic side of the membrane. Residues 182-202 (ISLFLLTILAIAMVISDAVLT) form a helical membrane-spanning segment. Over 203-219 (PPISVLSAVGGLREKVP) the chain is Extracellular. The chain crosses the membrane as a helical span at residues 220 to 240 (HLTTDQIVWITVAILVVLFAI). Over 241–251 (QRYGTDKVGYS) the chain is Cytoplasmic. A helical transmembrane segment spans residues 252–272 (FAPIILLWLLLIGATGLYNLI). Residues 273–301 (KHDISVLRAFNPKYIIDYFRRNKKEGWVS) lie on the Extracellular side of the membrane. A helical transmembrane segment spans residues 302-322 (LGSILLCFTGSEALFANLGYF). The Cytoplasmic portion of the chain corresponds to 323–328 (SIRSIQ). Residues 329–349 (LSFSFALLPSVLLTYIGQAAF) form a helical membrane-spanning segment. Topologically, residues 350–362 (LSKNPKNVANTFF) are extracellular. Residues 363 to 383 (AATPISLFWPTFIMAIAASII) traverse the membrane as a helical segment. The Cytoplasmic segment spans residues 384–420 (GSQAMISCAFATVSHLQSLSCFPRVKILHTSKRFPGQ). Residues 421-441 (LYIPGVNFLLCVAACVVTVSF) form a helical membrane-spanning segment. Residues 442 to 452 (KTTVIIGKAHE) are Extracellular-facing. Residues 453-473 (ICVILVMIITTLLMTIVMLLV) form a helical membrane-spanning segment. Residues 474–475 (WK) are Cytoplasmic-facing. A helical transmembrane segment spans residues 476–496 (INILWVALFFITFTSTEAVYL). The Extracellular portion of the chain corresponds to 497 to 508 (SSVLYKFTHGPY). A helical membrane pass occupies residues 509–529 (VPVAMSVVLMVVMIVWHYVHV). The Cytoplasmic segment spans residues 530-799 (KRYKYELEHT…LLKVGISYEI (270 aa)).

This sequence belongs to the HAK/KUP transporter (TC 2.A.72.3) family.

The protein resides in the membrane. In terms of biological role, high-affinity potassium transporter. This chain is Potassium transporter 21 (HAK21), found in Oryza sativa subsp. japonica (Rice).